Consider the following 233-residue polypeptide: Phosphoribosylformylglycinamidine synthase subunit PurQ (233 aa).

The 231-residue stretch at 3–233 (SAILVFPGIN…GLVAHLERAA (231 aa)) folds into the Glutamine amidotransferase type-1 domain. The active-site Nucleophile is the Cys-87. Residues His-204 and Glu-206 contribute to the active site.

As to quaternary structure, part of the FGAM synthase complex composed of 1 PurL, 1 PurQ and 2 PurS subunits.

The protein resides in the cytoplasm. The catalysed reaction is N(2)-formyl-N(1)-(5-phospho-beta-D-ribosyl)glycinamide + L-glutamine + ATP + H2O = 2-formamido-N(1)-(5-O-phospho-beta-D-ribosyl)acetamidine + L-glutamate + ADP + phosphate + H(+). The enzyme catalyses L-glutamine + H2O = L-glutamate + NH4(+). The protein operates within purine metabolism; IMP biosynthesis via de novo pathway; 5-amino-1-(5-phospho-D-ribosyl)imidazole from N(2)-formyl-N(1)-(5-phospho-D-ribosyl)glycinamide: step 1/2. Functionally, part of the phosphoribosylformylglycinamidine synthase complex involved in the purines biosynthetic pathway. Catalyzes the ATP-dependent conversion of formylglycinamide ribonucleotide (FGAR) and glutamine to yield formylglycinamidine ribonucleotide (FGAM) and glutamate. The FGAM synthase complex is composed of three subunits. PurQ produces an ammonia molecule by converting glutamine to glutamate. PurL transfers the ammonia molecule to FGAR to form FGAM in an ATP-dependent manner. PurS interacts with PurQ and PurL and is thought to assist in the transfer of the ammonia molecule from PurQ to PurL. The polypeptide is Phosphoribosylformylglycinamidine synthase subunit PurQ (Nitrobacter hamburgensis (strain DSM 10229 / NCIMB 13809 / X14)).